A 291-amino-acid polypeptide reads, in one-letter code: 33 kDa chaperonin (291 aa).

Cystine bridges form between Cys237–Cys239 and Cys270–Cys273.

Belongs to the HSP33 family. In terms of processing, under oxidizing conditions two disulfide bonds are formed involving the reactive cysteines. Under reducing conditions zinc is bound to the reactive cysteines and the protein is inactive.

Its subcellular location is the cytoplasm. Functionally, redox regulated molecular chaperone. Protects both thermally unfolding and oxidatively damaged proteins from irreversible aggregation. Plays an important role in the bacterial defense system toward oxidative stress. The chain is 33 kDa chaperonin from Bacillus cytotoxicus (strain DSM 22905 / CIP 110041 / 391-98 / NVH 391-98).